The chain runs to 594 residues: DNA mismatch repair protein MutL (594 aa).

The protein belongs to the DNA mismatch repair MutL/HexB family.

Its function is as follows. This protein is involved in the repair of mismatches in DNA. It is required for dam-dependent methyl-directed DNA mismatch repair. May act as a 'molecular matchmaker', a protein that promotes the formation of a stable complex between two or more DNA-binding proteins in an ATP-dependent manner without itself being part of a final effector complex. The protein is DNA mismatch repair protein MutL of Rhizorhabdus wittichii (strain DSM 6014 / CCUG 31198 / JCM 15750 / NBRC 105917 / EY 4224 / RW1) (Sphingomonas wittichii).